Reading from the N-terminus, the 185-residue chain is MSDEGLAPGKRLSEIRQQQGLSQRRAAELSGLTHSAISTIEQDKVSPAISTLQKLLKVYGLSLSEFFSEPEKPDEPQVVINQDDLIEMGSQGVSMKLVHNGNPNRTLAMIFETYQPGTTTGERIKHQGEEIGTVLEGEIVLTINGQDYHLVAGQSYAINTGIPHSFSNTSAGICRIISAHTPTTF.

The disordered stretch occupies residues 1-20 (MSDEGLAPGKRLSEIRQQQG). The HTH cro/C1-type domain occupies 12–66 (LSEIRQQQGLSQRRAAELSGLTHSAISTIEQDKVSPAISTLQKLLKVYGLSLSEF). The H-T-H motif DNA-binding region spans 23–42 (QRRAAELSGLTHSAISTIEQ). The region spanning 111 to 178 (FETYQPGTTT…TSAGICRIIS (68 aa)) is the Cupin type-2 domain.

Its pathway is amine and polyamine degradation; putrescine degradation [regulation]. In terms of biological role, represses puuA, puuD and puuP. The polypeptide is HTH-type transcriptional regulator PuuR (puuR) (Escherichia coli (strain K12)).